Reading from the N-terminus, the 445-residue chain is Methylenetetrahydrofolate--tRNA-(uracil-5-)-methyltransferase TrmFO (445 aa).

9–14 is an FAD binding site; it reads GGGLAG.

This sequence belongs to the MnmG family. TrmFO subfamily. The cofactor is FAD.

It is found in the cytoplasm. The enzyme catalyses uridine(54) in tRNA + (6R)-5,10-methylene-5,6,7,8-tetrahydrofolate + NADH + H(+) = 5-methyluridine(54) in tRNA + (6S)-5,6,7,8-tetrahydrofolate + NAD(+). It catalyses the reaction uridine(54) in tRNA + (6R)-5,10-methylene-5,6,7,8-tetrahydrofolate + NADPH + H(+) = 5-methyluridine(54) in tRNA + (6S)-5,6,7,8-tetrahydrofolate + NADP(+). Functionally, catalyzes the folate-dependent formation of 5-methyl-uridine at position 54 (M-5-U54) in all tRNAs. This is Methylenetetrahydrofolate--tRNA-(uracil-5-)-methyltransferase TrmFO from Aquifex aeolicus (strain VF5).